The sequence spans 305 residues: Homoserine O-acetyltransferase (305 aa).

The active-site Acyl-thioester intermediate is the Cys142. Substrate contacts are provided by Lys163 and Ser192. His235 acts as the Proton acceptor in catalysis. Glu237 is an active-site residue. Arg249 provides a ligand contact to substrate.

It belongs to the MetA family.

The protein localises to the cytoplasm. It carries out the reaction L-homoserine + acetyl-CoA = O-acetyl-L-homoserine + CoA. It functions in the pathway amino-acid biosynthesis; L-methionine biosynthesis via de novo pathway; O-acetyl-L-homoserine from L-homoserine: step 1/1. Functionally, transfers an acetyl group from acetyl-CoA to L-homoserine, forming acetyl-L-homoserine. This chain is Homoserine O-acetyltransferase, found in Acetivibrio thermocellus (strain ATCC 27405 / DSM 1237 / JCM 9322 / NBRC 103400 / NCIMB 10682 / NRRL B-4536 / VPI 7372) (Clostridium thermocellum).